The following is a 165-amino-acid chain: Phosphopantetheine adenylyltransferase (165 aa).

Ser10 is a substrate binding site. ATP is bound by residues 10-11 and His18; that span reads SF. Residues Lys42, Thr79, and Arg93 each contribute to the substrate site. ATP is bound by residues 94-96, Glu104, and 129-135; these read GLR and VRPITAT.

It belongs to the bacterial CoaD family. As to quaternary structure, homohexamer. Mg(2+) serves as cofactor.

It is found in the cytoplasm. It carries out the reaction (R)-4'-phosphopantetheine + ATP + H(+) = 3'-dephospho-CoA + diphosphate. It participates in cofactor biosynthesis; coenzyme A biosynthesis; CoA from (R)-pantothenate: step 4/5. Functionally, reversibly transfers an adenylyl group from ATP to 4'-phosphopantetheine, yielding dephospho-CoA (dPCoA) and pyrophosphate. The chain is Phosphopantetheine adenylyltransferase from Rhodopseudomonas palustris (strain BisB5).